The chain runs to 529 residues: MSDKKLLEEIKKRRTFAIISHPDAGKTTITEKVLLFGRALQTAGTVKGKKSGQHAKSDWMEMEKERGISVTTSVMQFPYSDHLVNLLDTPGHEDFSEDTYRTLTAVDSCLMVIDAAKGVEDRTRKLMEVTRLRDTPIVTFMNKLDRDIRDPMELLDEVETELDILCAPITWPIGCGKSFKGVYHLHRDETILYQSGHGHTIQDVRIIKGLDNPELDTAVGSDLAETLRDELELVRGASNEFDQELFREGQLTPVFFGTALGNFGVDHMLDGLVEWAPAPLGRETEEGTIESTDGKFSGFVFKIQANMDPKHRDRIAFCRIVSGKYEKGMKMRNSRLGKDVRISDALTFLAGDRSLLEEAYAGDIIGLHNHGTIRIGDTFTSGDNYRFTGIPNFAPELFKRIRLKDPLKQKQLLKGLIQLSEEGAVQVFRPLANNDLIVGAVGVLQFDVVVARLKAEYNVDALYEHVNVATARWVYSSDEKKLDEFRRKGEQNLALDGGDNLTYIAPTMVNLQLAQERYPDIQFTNTREN.

In terms of domain architecture, tr-type G spans 11-280 (KKRRTFAIIS…GLVEWAPAPL (270 aa)). Residues 20-27 (SHPDAGKT), 88-92 (DTPGH), and 142-145 (NKLD) each bind GTP.

The protein belongs to the TRAFAC class translation factor GTPase superfamily. Classic translation factor GTPase family. PrfC subfamily.

It localises to the cytoplasm. Increases the formation of ribosomal termination complexes and stimulates activities of RF-1 and RF-2. It binds guanine nucleotides and has strong preference for UGA stop codons. It may interact directly with the ribosome. The stimulation of RF-1 and RF-2 is significantly reduced by GTP and GDP, but not by GMP. The sequence is that of Peptide chain release factor 3 from Alteromonas mediterranea (strain DSM 17117 / CIP 110805 / LMG 28347 / Deep ecotype).